A 354-amino-acid chain; its full sequence is 3-dehydroquinate synthase (354 aa).

NAD(+) contacts are provided by residues 61–66 (DGESTK), 119–120 (TT), Lys-132, Lys-141, and 159–162 (FLET). The Zn(2+) site is built by Glu-174, His-238, and His-254.

The protein belongs to the sugar phosphate cyclases superfamily. Dehydroquinate synthase family. The cofactor is NAD(+). Co(2+) is required as a cofactor. Zn(2+) serves as cofactor.

The protein resides in the cytoplasm. It carries out the reaction 7-phospho-2-dehydro-3-deoxy-D-arabino-heptonate = 3-dehydroquinate + phosphate. Its pathway is metabolic intermediate biosynthesis; chorismate biosynthesis; chorismate from D-erythrose 4-phosphate and phosphoenolpyruvate: step 2/7. Functionally, catalyzes the conversion of 3-deoxy-D-arabino-heptulosonate 7-phosphate (DAHP) to dehydroquinate (DHQ). The chain is 3-dehydroquinate synthase from Saccharolobus solfataricus (strain ATCC 35092 / DSM 1617 / JCM 11322 / P2) (Sulfolobus solfataricus).